The primary structure comprises 702 residues: Polyribonucleotide nucleotidyltransferase (702 aa).

Positions 485 and 491 each coordinate Mg(2+). One can recognise a KH domain in the interval 552-612 (PRTEIICIDP…EGVKKAISII (61 aa)). The 69-residue stretch at 622–690 (GEIYLGKVTK…NQGRINLSRK (69 aa)) folds into the S1 motif domain.

It belongs to the polyribonucleotide nucleotidyltransferase family. The cofactor is Mg(2+).

The protein resides in the cytoplasm. It carries out the reaction RNA(n+1) + phosphate = RNA(n) + a ribonucleoside 5'-diphosphate. In terms of biological role, involved in mRNA degradation. Catalyzes the phosphorolysis of single-stranded polyribonucleotides processively in the 3'- to 5'-direction. The sequence is that of Polyribonucleotide nucleotidyltransferase from Clostridium botulinum (strain Langeland / NCTC 10281 / Type F).